A 328-amino-acid chain; its full sequence is Glycerophosphodiester phosphodiesterase GDPD4 (328 aa).

A helical membrane pass occupies residues 35 to 55; it reads TILFAVIFLAIFPPLYFHFKL. A GP-PDE domain is found at 73–312; it reads PLVCAHGGDS…SDPSMFQGLM (240 aa).

Belongs to the glycerophosphoryl diester phosphodiesterase family. As to expression, expressed in rosette and cauline leaves.

It is found in the membrane. The catalysed reaction is a sn-glycero-3-phosphodiester + H2O = an alcohol + sn-glycerol 3-phosphate + H(+). This Arabidopsis thaliana (Mouse-ear cress) protein is Glycerophosphodiester phosphodiesterase GDPD4.